Reading from the N-terminus, the 195-residue chain is ATP-dependent Clp protease proteolytic subunit (195 aa).

Serine 94 (nucleophile) is an active-site residue. Histidine 119 is a catalytic residue.

The protein belongs to the peptidase S14 family. In terms of assembly, component of the chloroplastic Clp protease core complex.

It is found in the plastid. It localises to the chloroplast stroma. It catalyses the reaction Hydrolysis of proteins to small peptides in the presence of ATP and magnesium. alpha-casein is the usual test substrate. In the absence of ATP, only oligopeptides shorter than five residues are hydrolyzed (such as succinyl-Leu-Tyr-|-NHMec, and Leu-Tyr-Leu-|-Tyr-Trp, in which cleavage of the -Tyr-|-Leu- and -Tyr-|-Trp bonds also occurs).. Functionally, cleaves peptides in various proteins in a process that requires ATP hydrolysis. Has a chymotrypsin-like activity. Plays a major role in the degradation of misfolded proteins. The protein is ATP-dependent Clp protease proteolytic subunit of Cycas taitungensis (Prince sago).